The sequence spans 330 residues: MEAVPSSDSYPAVENEHLQETPESNNSVYTSFMKSHRCYDLIPTSSKLVVFDTSLQVKKAFFALVTNGVRAAPLWDSKKQSFVGMLTITDFINILHRYYKSALVQIYELEEHKIETWREVYLQDSFKPLVCISPNASLFDAVSSLIRNKIHRLPVIDPESGNTLYILTHKRILKFLKLFITEFPKPEFMSKSLEELQIGTYANIAMVRTTTPVYVALGIFVQHRVSALPVVDEKGRVVDIYSKFDVINLAAEKTYNNLDVSVTKALQHRSHYFEGVLKCYLHETLETIINRLVEAEVHRLVVVDENDVVKGIVSLSDILQALVLTGGEKP.

Residues 1 to 24 are disordered; sequence MEAVPSSDSYPAVENEHLQETPES. 3 CBS domains span residues 43–103, 125–187, and 198–260; these read PTSS…KSAL, SFKP…PKPE, and IGTY…NLDV. Residues Arg70, 85–90, Val130, 151–152, and Lys170 contribute to the ADP site; these read MLTITD and HR. AMP-binding positions include Arg70, 85–90, Val130, His151, 151–152, Lys170, Thr200, Ala205, 226–227, and 242–245; these read MLTITD, HR, SA, and SKFD. Residues Arg70, 85–90, Val130, 151–152, Arg152, and Lys170 contribute to the ATP site; these read MLTITD and HR. An AMPK pseudosubstrate motif is present at residues 138–159; it reads LFDAVSSLIRNKIHRLPVIDPE. 242–245 is an ADP binding site; that stretch reads SKFD. Residue 242 to 245 coordinates ATP; the sequence is SKFD. Phosphoserine; by ULK1 is present on Ser261. Thr263 bears the Phosphothreonine; by ULK1 mark. Residue Arg269 participates in ADP binding. Arg269 provides a ligand contact to AMP. An ATP-binding site is contributed by Arg269. Phosphoserine; by ULK1 is present on Ser270. Positions 272–329 constitute a CBS 4 domain; it reads YFEGVLKCYLHETLETIINRLVEAEVHRLVVVDENDVVKGIVSLSDILQALVLTGGEK. Residues Leu277 and 298–299 each bind ADP; that span reads HR. Residues Leu277, His298, 298–299, and 314–317 each bind AMP; these read HR and SLSD. ATP-binding positions include Leu277 and 298-299; that span reads HR.

Belongs to the 5'-AMP-activated protein kinase gamma subunit family. In terms of assembly, AMPK is a heterotrimer of an alpha catalytic subunit (PRKAA1 or PRKAA2), a beta (PRKAB1 or PRKAB2) and a gamma non-catalytic subunits (PRKAG1, PRKAG2 or PRKAG3). Interacts with FNIP1 and FNIP2. In terms of processing, phosphorylated by ULK1 and ULK2; leading to negatively regulate AMPK activity and suggesting the existence of a regulatory feedback loop between ULK1, ULK2 and AMPK. Glycosylated; O-GlcNAcylated by OGT, promoting the AMP-activated protein kinase (AMPK) activity.

In terms of biological role, AMP/ATP-binding subunit of AMP-activated protein kinase (AMPK), an energy sensor protein kinase that plays a key role in regulating cellular energy metabolism. In response to reduction of intracellular ATP levels, AMPK activates energy-producing pathways and inhibits energy-consuming processes: inhibits protein, carbohydrate and lipid biosynthesis, as well as cell growth and proliferation. AMPK acts via direct phosphorylation of metabolic enzymes, and by longer-term effects via phosphorylation of transcription regulators. Also acts as a regulator of cellular polarity by remodeling the actin cytoskeleton; probably by indirectly activating myosin. Gamma non-catalytic subunit mediates binding to AMP, ADP and ATP, leading to activate or inhibit AMPK: AMP-binding results in allosteric activation of alpha catalytic subunit (PRKAA1 or PRKAA2) both by inducing phosphorylation and preventing dephosphorylation of catalytic subunits. ADP also stimulates phosphorylation, without stimulating already phosphorylated catalytic subunit. ATP promotes dephosphorylation of catalytic subunit, rendering the AMPK enzyme inactive. The protein is 5'-AMP-activated protein kinase subunit gamma-1 (PRKAG1) of Bos taurus (Bovine).